We begin with the raw amino-acid sequence, 343 residues long: Selenide, water dikinase (343 aa).

Residue Cys-15 is part of the active site. ATP-binding positions include Lys-18 and 46–48; that span reads NKD. Asp-49 is a Mg(2+) binding site. Residues Asp-66, Asp-89, and 137 to 139 each bind ATP; that span reads GHS. Asp-89 lines the Mg(2+) pocket. Asp-225 lines the Mg(2+) pocket.

It belongs to the selenophosphate synthase 1 family. Class I subfamily. As to quaternary structure, homodimer. The cofactor is Mg(2+).

It catalyses the reaction hydrogenselenide + ATP + H2O = selenophosphate + AMP + phosphate + 2 H(+). Synthesizes selenophosphate from selenide and ATP. This chain is Selenide, water dikinase, found in Sulfurovum sp. (strain NBC37-1).